We begin with the raw amino-acid sequence, 274 residues long: Lipid phosphate phosphatase 1 (274 aa).

The Lumenal segment spans residues M1–K15. Residues L16–Y33 form a helical membrane-spanning segment. Over S34–C69 the chain is Cytoplasmic. Residues L70 to F87 form a helical membrane-spanning segment. The Lumenal portion of the chain corresponds to D88–S117. The chain crosses the membrane as a helical span at residues I118–I139. Residues K136–P144 form a phosphatase sequence motif I region. Residues G140–H189 are Cytoplasmic-facing. The interval P186–H189 is phosphatase sequence motif II. A helical transmembrane segment spans residues S190–W203. Over Q204–S214 the chain is Lumenal. A helical membrane pass occupies residues C215 to I231. Residues S228 to D239 are phosphatase sequence motif III. The Cytoplasmic segment spans residues D232–W237. The chain crosses the membrane as a helical span at residues Y238–W255. The Lumenal segment spans residues K256–V274.

This sequence belongs to the PA-phosphatase related phosphoesterase family.

Its subcellular location is the golgi apparatus membrane. It carries out the reaction a 1,2-diacyl-sn-glycerol 3-diphosphate + H2O = a 1,2-diacyl-sn-glycero-3-phosphate + phosphate + H(+). The enzyme catalyses a 1,2-diacyl-sn-glycero-3-phosphate + H2O = a 1,2-diacyl-sn-glycerol + phosphate. The catalysed reaction is a 1-acyl-sn-glycero-3-phosphate + H2O = a 1-acyl-sn-glycerol + phosphate. With respect to regulation, PA phosphatase activity is magnesium ion-independent and potently inhibited by N-ethylmaleimide. Also inhibited by phenylglyoxal and propranolol. Catalyzes the dephosphorylation of diacylglycerol diphosphate (DGPP) to phosphatidate (PA) and the subsequent dephosphorylation of PA to diacylglycerol (DAG). Together with DPP1, regulates intracellular DGPP and PA levels which are phospholipid molecules believed to play a signaling role in stress response. Can also use lysophosphatidic acid (LPA) as a substrate. Substrate preference is PA &gt; DGPP &gt; LPA. The sequence is that of Lipid phosphate phosphatase 1 (LPP1) from Saccharomyces cerevisiae (strain ATCC 204508 / S288c) (Baker's yeast).